Reading from the N-terminus, the 688-residue chain is MQPTRSVRPFKVVSDYSPSGDQPTAIAELAGRVNAGEPDVVLLGATGTGKSATAAWLIEKVQRPTLILAHNKTLAAQLATEFRELMPDNAVEYFVSYYDYYQPEAYVPQTDTFIEKDSSVNAEVERLRHSTTNSLLSRRDVVVVSTVSCIYGLGQPEQYMNAMVALQVGMQIDRDTLIRKFVSMQYQRNDVDFSRGNFRVRGDTIEIIPMYEELAIRIEMFGDEIEALYQLHPLTGDVVRKMDSVSVFPGSHYVAETEVMRRAIGTIQQELEERLTVLEREGKLLEAQRLRMRTNFDIEMMQQIGFCSGIENYSRHIDGRDAGEAPHCLLDYFPDDFLVVIDESHVTVPQIGAMFEGDSSRKRTLVEHGFRLPSALDNRPLKWNEFTERVPQTVYMSATPGKYELGMGDGVVEQIIRPTGLIDPAIVVKPTKGQIDDLLEQIRIRVEKDERILVTTLTKKMAEELTDYFAEAGVRVRYLHSDVDTLRRVELLSELRAGVYDVLVGINLLREGLDLPEVSLVAILDADKEGFLRSSTSLIQTIGRAARNVSGEVHMYADVLTDSMKRAIEETDRRREKQVAYNTEHGIDPTPLRKRIADITEILAREGEDTKKMLEGRGGGKRSPTPNLRREGKAAAGANELETIISDLNDQMLQAAGELKFELAARLRDELGDLKRELRQMEKAGHLS.

The region spanning 31–188 (GRVNAGEPDV…RKFVSMQYQR (158 aa)) is the Helicase ATP-binding domain. An ATP-binding site is contributed by 44–51 (GATGTGKS). The Beta-hairpin motif lies at 97 to 120 (YYDYYQPEAYVPQTDTFIEKDSSV). The 154-residue stretch at 434–587 (QIDDLLEQIR…QVAYNTEHGI (154 aa)) folds into the Helicase C-terminal domain. The tract at residues 607-632 (GEDTKKMLEGRGGGKRSPTPNLRREG) is disordered. Residues 642–677 (ETIISDLNDQMLQAAGELKFELAARLRDELGDLKRE) enclose the UVR domain.

Belongs to the UvrB family. In terms of assembly, forms a heterotetramer with UvrA during the search for lesions. Interacts with UvrC in an incision complex.

It localises to the cytoplasm. Its function is as follows. The UvrABC repair system catalyzes the recognition and processing of DNA lesions. A damage recognition complex composed of 2 UvrA and 2 UvrB subunits scans DNA for abnormalities. Upon binding of the UvrA(2)B(2) complex to a putative damaged site, the DNA wraps around one UvrB monomer. DNA wrap is dependent on ATP binding by UvrB and probably causes local melting of the DNA helix, facilitating insertion of UvrB beta-hairpin between the DNA strands. Then UvrB probes one DNA strand for the presence of a lesion. If a lesion is found the UvrA subunits dissociate and the UvrB-DNA preincision complex is formed. This complex is subsequently bound by UvrC and the second UvrB is released. If no lesion is found, the DNA wraps around the other UvrB subunit that will check the other stand for damage. This chain is UvrABC system protein B, found in Clavibacter michiganensis subsp. michiganensis (strain NCPPB 382).